The following is a 128-amino-acid chain: Holo-[acyl-carrier-protein] synthase (128 aa).

The Mg(2+) site is built by aspartate 8 and glutamate 58.

The protein belongs to the P-Pant transferase superfamily. AcpS family. It depends on Mg(2+) as a cofactor.

The protein localises to the cytoplasm. It carries out the reaction apo-[ACP] + CoA = holo-[ACP] + adenosine 3',5'-bisphosphate + H(+). Transfers the 4'-phosphopantetheine moiety from coenzyme A to a Ser of acyl-carrier-protein. In Alkalilimnicola ehrlichii (strain ATCC BAA-1101 / DSM 17681 / MLHE-1), this protein is Holo-[acyl-carrier-protein] synthase.